The following is a 265-amino-acid chain: MSRIDDTFARLSETGGKAFVAYMMGCDPDFDTSLQIMRGLPGAGVDIIELGMPFTDPMADGATIQAAGQRALAAGGSVSRVLDMVRAFRRDDDATPIVLMGYYNPIYARQGGVDRFITEAVEAGVDGLIVVDLPPEEDAELCLPAREAGLNFIRLATPTTDDRRLPAVVRNTSGFVYYVSVTGITGGPAANAAEVAPEVARIRAAAKLPVVVGFGISTPEAAQAVAGVADGCVVGSAIVKLIGEGRPVPEILSFVADLAQGAHSA.

Residues glutamate 49 and aspartate 60 each act as proton acceptor in the active site.

The protein belongs to the TrpA family. As to quaternary structure, tetramer of two alpha and two beta chains.

The enzyme catalyses (1S,2R)-1-C-(indol-3-yl)glycerol 3-phosphate + L-serine = D-glyceraldehyde 3-phosphate + L-tryptophan + H2O. Its pathway is amino-acid biosynthesis; L-tryptophan biosynthesis; L-tryptophan from chorismate: step 5/5. Its function is as follows. The alpha subunit is responsible for the aldol cleavage of indoleglycerol phosphate to indole and glyceraldehyde 3-phosphate. This is Tryptophan synthase alpha chain from Paracoccus denitrificans (strain Pd 1222).